Consider the following 113-residue polypeptide: Small ribosomal subunit protein bS6 (113 aa).

The protein belongs to the bacterial ribosomal protein bS6 family.

In terms of biological role, binds together with bS18 to 16S ribosomal RNA. The sequence is that of Small ribosomal subunit protein bS6 (rpsF) from Buchnera aphidicola subsp. Acyrthosiphon pisum (strain APS) (Acyrthosiphon pisum symbiotic bacterium).